The sequence spans 265 residues: Mycothiol acetyltransferase (265 aa).

N-acetyltransferase domains lie at 1 to 110 (MDDL…PPLP) and 118 to 265 (VSVR…YVRG). Residue Asp3 participates in 1D-myo-inositol 2-(L-cysteinylamino)-2-deoxy-alpha-D-glucopyranoside binding. An acetyl-CoA-binding site is contributed by 44-46 (VQV). 3 residues coordinate 1D-myo-inositol 2-(L-cysteinylamino)-2-deoxy-alpha-D-glucopyranoside: Glu145, Arg185, and Glu198. Acetyl-CoA-binding positions include 202-204 (LGV) and 209-215 (HCKGLGK). Tyr236 lines the 1D-myo-inositol 2-(L-cysteinylamino)-2-deoxy-alpha-D-glucopyranoside pocket.

It belongs to the acetyltransferase family. MshD subfamily. Monomer.

The catalysed reaction is 1D-myo-inositol 2-(L-cysteinylamino)-2-deoxy-alpha-D-glucopyranoside + acetyl-CoA = mycothiol + CoA + H(+). Functionally, catalyzes the transfer of acetyl from acetyl-CoA to desacetylmycothiol (Cys-GlcN-Ins) to form mycothiol. The polypeptide is Mycothiol acetyltransferase (Segniliparus rotundus (strain ATCC BAA-972 / CDC 1076 / CIP 108378 / DSM 44985 / JCM 13578)).